The chain runs to 666 residues: Secreted protein ARB_01864 (666 aa).

An N-terminal signal peptide occupies residues 1 to 18 (MRFSTLVSLAAWAAAALA). N-linked (GlcNAc...) asparagine glycans are attached at residues N160, N216, N342, N405, N594, N600, and N662. The tract at residues 323 to 353 (RGSMKPRGVPNPTRRAIKGNATTSTQPYQHP) is disordered.

It localises to the secreted. The polypeptide is Secreted protein ARB_01864 (Arthroderma benhamiae (strain ATCC MYA-4681 / CBS 112371) (Trichophyton mentagrophytes)).